The chain runs to 166 residues: ATP synthase subunit b 1 (166 aa).

Residues 7–29 traverse the membrane as a helical segment; the sequence is FWTALAFVLFFVIFGRKLWVAIT.

This sequence belongs to the ATPase B chain family. In terms of assembly, F-type ATPases have 2 components, F(1) - the catalytic core - and F(0) - the membrane proton channel. F(1) has five subunits: alpha(3), beta(3), gamma(1), delta(1), epsilon(1). F(0) has three main subunits: a(1), b(2) and c(10-14). The alpha and beta chains form an alternating ring which encloses part of the gamma chain. F(1) is attached to F(0) by a central stalk formed by the gamma and epsilon chains, while a peripheral stalk is formed by the delta and b chains.

It is found in the cell inner membrane. F(1)F(0) ATP synthase produces ATP from ADP in the presence of a proton or sodium gradient. F-type ATPases consist of two structural domains, F(1) containing the extramembraneous catalytic core and F(0) containing the membrane proton channel, linked together by a central stalk and a peripheral stalk. During catalysis, ATP synthesis in the catalytic domain of F(1) is coupled via a rotary mechanism of the central stalk subunits to proton translocation. Functionally, component of the F(0) channel, it forms part of the peripheral stalk, linking F(1) to F(0). The protein is ATP synthase subunit b 1 of Gluconobacter oxydans (strain 621H) (Gluconobacter suboxydans).